Here is a 298-residue protein sequence, read N- to C-terminus: Exosome complex component Rrp4 (298 aa).

Residues 63 to 131 form the S1 motif domain; it reads GDVVIGKIKD…EVKKVKLGLK (69 aa). Positions 139 to 197 constitute a KH domain; the sequence is RGGIIVDITPTKVPRLIGKKGSMINMIKDKTNCKIIVGQNGLVWVKGEEDMEQLTKDII. Positions 276 to 298 are disordered; it reads KNKKDKPLSYGNNSGNSYILNNR. The span at 285–298 shows a compositional bias: polar residues; that stretch reads YGNNSGNSYILNNR.

This sequence belongs to the RRP4 family. As to quaternary structure, component of the archaeal exosome complex. Forms a trimer of Rrp4 and/or Csl4 subunits. The trimer associates with a hexameric ring-like arrangement composed of 3 Rrp41-Rrp42 heterodimers.

Its subcellular location is the cytoplasm. Functionally, non-catalytic component of the exosome, which is a complex involved in RNA degradation. Increases the RNA binding and the efficiency of RNA degradation. Confers strong poly(A) specificity to the exosome. This Methanobrevibacter smithii (strain ATCC 35061 / DSM 861 / OCM 144 / PS) protein is Exosome complex component Rrp4.